Consider the following 2203-residue polypeptide: MMMMMMMKKMQHQRQQQEDHANEANYARGTRLPISGEGPTSQPNSSKQTVLSWQAAIDAARQAKAAQTMSTSAPPPVGSLSQRKRQQYAKSKKQGNSSNSRPARALFCLSLNNPIRRACISIVDWKPFDIFILLAIFANCVALAIYIPFPEDDSNSTNHNLEKVEYAFLIIFTVETFLKIIASGLLLHPNASVRNGWNLLDFVIVIVGLFSVILEQLTKETEGGNHSSGKSGGFDVKALRAFRVLRPLRLVSGVPSLQVVLNSIIKAMVPLLHIALLVLFVIIIYAIIGLELFIGKMHKTCFFADSDIVAEEDPAPCAFSGNGRQCAANGTECRSGWVGPNGGITNFDNFAFAMLTVFQCITMEGWTDVLYWVNDAIGWEWPWVYFVSLIILGSFFVLNLVLGVLSGEFSKEREKAKARGDFQKLREKQQLEEDLKGYLDWITQAEDIDPENEEEGGEEGKRNTSMPTSETESVNTENVSGEGETQGCCGSLWCWWKRRGAAKTGPSGCRRWGQAISKSKLRSHGAREALCVCRCSLESLVKLWTSRFSAHLQAAYVRPYSRRWRRWNRFNRRRCRAAVKSVTFYWLVIVLVFLNTLTISSEHYNQPDWLTQIQDIANKVLLALFTCEMLVKMYSLGLQAYFVSLFNRFDCFVVCGGITETILVELELMSPLGVSVFRCVRLLRIFKVTRHWTSLSNLVASLLNSMKSIASLLLLLFLFIIIFSLLGMQLFGGKFNFDETQTKRSTFDNFPQALLTVFQILTGEDWNAVMYDGIMAYGGPSSSGMIVCIYFIILFICGNYILLKLFLAIAVDNLADAESLNTAQKEEAEEKERKKIARKESLENKKNNKPEVNQIANSDNKVTIDDYQEEAEDKDPYPPCDVPVGEEEEEEEEDEPEVPAGPRPRRISELNMKEKIAPIPEGSAFFILSKTNPIRVGCHKLINHHIFTNLILVFIMLSSAALAAEDPIRSHSFRNTILGYFDYAFTAIFTVEILLKMTTFGAFLHKGAFCRNYFNLLDMLVVGVSLVSFGIQSSAISVVKILRVLRVLRPLRAINRAKGLKHVVQCVFVAIRTIGNIMIVTTLLQFMFACIGVQLFKGKFYRCTDEAKSNPEECRGLFILYKDGDVDSPVVRERIWQNSDFNFDNVLSAMMALFTVSTFEGWPALLYKAIDSNGENVGPVYNYRVEISIFFIIYIIIVAFFMMNIFVGFVIVTFQEQGEKEYKNCELDKNQRQCVEYALKARPLRRYIPKNPYQYKFWYVVNSSPFEYMMFVLIMLNTLCLAMQHYEQSKMFNDAMDILNMVFTGVFTVEMVLKVIAFKPKGYFSDAWNTFDSLIVIGSIIDVALSEADNSEESNRISITFFRLFRVMRLVKLLSRGEGIRTLLWTFIKSFQALPYVALLIAMLFFIYAVIGMQMFGKVAMRDNNQINRNNNFQTFPQAVLLLFRCATGEAWQEIMLACLPGKLCDPDSDYNPGEEYTCGSNFAIVYFISFYMLCAFLIINLFVAVIMDNFDYLTRDWSILGPHHLDEFKRIWSEYDPEAKGRIKHLDVVTLLRRIQPPLGFGKLCPHRVACKRLVAMNMPLNSDGTVMFNATLFALVRTALKIKTEGNLEQANEELRAVIKKIWKKTSMKLLDQVVPPAGDDEVTVGKFYATFLIQDYFRKFKKRKEQGLVGKYPAKNTTIALQAGLRTLHDIGPEIRRAISCDLQDDEPEDSKPEEEDVFKRNGALLGNYVNHVNSDRRESLQQTNTTHRPLHVQRPSIPPASDTEKPLFPPAGNSVCHNHHNHNSIGKQVPTSTNANLNNANMSKAAHGKRPSIGDLEHVSENGHYSYKHDRELQRRSSIKRTRYYETYIRSESGDEQLPTIFREDPEIHGYFRDPRCFGEQEYFSSEECCEDDSSPTWSRQNYSYYNRYPGSSMDFERPRGYHHPQGFLEDDDSPIGYDSRRSPRRRLLPPTPPSHRRSSFNFECLRRQNSQDDVLPSPALPHRAALPLHLMQQQIMAVAGLDSSKAQKYSPSHSTRSWATPPATPPYRDWTPCYTPLIQVDRSESMDQVNGSLPSLHRSSWYTDEPDISYRTFTPASLTVPSSFRNKNSDKQRSADSLVEAVLISEGLGRYARDPKFVSATKHEIADACDLTIDEMESAASTLLNGSVCPRANGDMGPISHRQDYELQDFGPGYSDEEPDPGREEEDLADEMICITTL.

2 disordered regions span residues 1–51 and 64–100; these read MMMM…QTVL and KAAQTMSTSAPPPVGSLSQRKRQQYAKSKKQGNSSNS. The Cytoplasmic portion of the chain corresponds to 1–126; it reads MMMMMMMKKM…RACISIVDWK (126 aa). A compositionally biased stretch (polar residues) spans 38-51; that stretch reads GPTSQPNSSKQTVL. Over residues 82–93 the composition is skewed to basic residues; the sequence is QRKRQQYAKSKK. The stretch at 112–408 is one I repeat; it reads NNPIRRACIS…NLVLGVLSGE (297 aa). The chain crosses the membrane as a helical span at residues 127–145; it reads PFDIFILLAIFANCVALAI. Over 146–163 the chain is Extracellular; that stretch reads YIPFPEDDSNSTNHNLEK. Asn155 carries N-linked (GlcNAc...) asparagine glycosylation. Residues 164 to 183 traverse the membrane as a helical segment; it reads VEYAFLIIFTVETFLKIIAS. The Cytoplasmic segment spans residues 184 to 195; sequence GLLLHPNASVRN. Residues 196-214 form a helical membrane-spanning segment; sequence GWNLLDFVIVIVGLFSVIL. The Extracellular portion of the chain corresponds to 215 to 235; the sequence is EQLTKETEGGNHSSGKSGGFD. An N-linked (GlcNAc...) asparagine glycan is attached at Asn225. A helical transmembrane segment spans residues 236 to 254; that stretch reads VKALRAFRVLRPLRLVSGV. At 255–273 the chain is on the cytoplasmic side; sequence PSLQVVLNSIIKAMVPLLH. Residues 274–293 traverse the membrane as a helical segment; the sequence is IALLVLFVIIIYAIIGLELF. Residues 294–381 lie on the Extracellular side of the membrane; the sequence is IGKMHKTCFF…WVNDAIGWEW (88 aa). Asn329 carries an N-linked (GlcNAc...) asparagine glycan. Glu364 contacts Ca(2+). The helical transmembrane segment at 382–406 threads the bilayer; the sequence is PWVYFVSLIILGSFFVLNLVLGVLS. Over 407-582 the chain is Cytoplasmic; it reads GEFSKEREKA…RRCRAAVKSV (176 aa). Positions 429 to 446 are binding to the beta subunit; sequence QQLEEDLKGYLDWITQAE. Residues 449–480 form a disordered region; sequence DPENEEEGGEEGKRNTSMPTSETESVNTENVS. Polar residues predominate over residues 463–479; that stretch reads NTSMPTSETESVNTENV. An II repeat occupies 528–774; sequence EALCVCRCSL…DWNAVMYDGI (247 aa). The helical transmembrane segment at 583-602 threads the bilayer; that stretch reads TFYWLVIVLVFLNTLTISSE. Over 603-617 the chain is Extracellular; it reads HYNQPDWLTQIQDIA. The helical transmembrane segment at 618–636 threads the bilayer; it reads NKVLLALFTCEMLVKMYSL. The Cytoplasmic portion of the chain corresponds to 637–644; that stretch reads GLQAYFVS. The helical transmembrane segment at 645-663 threads the bilayer; sequence LFNRFDCFVVCGGITETIL. The Extracellular portion of the chain corresponds to 664 to 673; sequence VELELMSPLG. A helical membrane pass occupies residues 674–692; the sequence is VSVFRCVRLLRIFKVTRHW. At 693–711 the chain is on the cytoplasmic side; it reads TSLSNLVASLLNSMKSIAS. The helical transmembrane segment at 712-732 threads the bilayer; that stretch reads LLLLLFLFIIIFSLLGMQLFG. Residues 733–786 lie on the Extracellular side of the membrane; sequence GKFNFDETQTKRSTFDNFPQALLTVFQILTGEDWNAVMYDGIMAYGGPSSSGMI. Glu764 lines the Ca(2+) pocket. The helical transmembrane segment at 787-811 threads the bilayer; the sequence is VCIYFIILFICGNYILLKLFLAIAV. Residues 812 to 945 are Cytoplasmic-facing; it reads DNLADAESLN…VGCHKLINHH (134 aa). The segment at 822–909 is disordered; that stretch reads TAQKEEAEEK…AGPRPRRISE (88 aa). Residues 824 to 849 show a composition bias toward basic and acidic residues; that stretch reads QKEEAEEKERKKIARKESLENKKNNK. The span at 850–861 shows a compositional bias: polar residues; it reads PEVNQIANSDNK. Residues 884–897 show a composition bias toward acidic residues; it reads VGEEEEEEEEDEPE. One copy of the III repeat lies at 892–1174; sequence EEDEPEVPAG…LLYKAIDSNG (283 aa). The chain crosses the membrane as a helical span at residues 946 to 964; it reads IFTNLILVFIMLSSAALAA. Topologically, residues 965–980 are extracellular; sequence EDPIRSHSFRNTILGY. Residues 981–1000 traverse the membrane as a helical segment; that stretch reads FDYAFTAIFTVEILLKMTTF. The Cytoplasmic segment spans residues 1001–1012; sequence GAFLHKGAFCRN. A helical membrane pass occupies residues 1013–1031; it reads YFNLLDMLVVGVSLVSFGI. At 1032 to 1037 the chain is on the extracellular side; sequence QSSAIS. Residues 1038–1057 traverse the membrane as a helical segment; the sequence is VVKILRVLRVLRPLRAINRA. Residues 1058–1076 lie on the Cytoplasmic side of the membrane; sequence KGLKHVVQCVFVAIRTIGN. The chain crosses the membrane as a helical span at residues 1077–1096; that stretch reads IMIVTTLLQFMFACIGVQLF. The Extracellular portion of the chain corresponds to 1097–1186; sequence KGKFYRCTDE…VGPVYNYRVE (90 aa). The segment at 1134-1224 is dihydropyridine binding; the sequence is RIWQNSDFNF…QEQGEKEYKN (91 aa). Glu1160 contacts Ca(2+). Residues 1187-1207 form a helical membrane-spanning segment; that stretch reads ISIFFIIYIIIVAFFMMNIFV. The Cytoplasmic segment spans residues 1208–1264; it reads GFVIVTFQEQGEKEYKNCELDKNQRQCVEYALKARPLRRYIPKNPYQYKFWYVVNSS. The stretch at 1211-1486 is one IV repeat; it reads IVTFQEQGEK…YTCGSNFAIV (276 aa). Residues 1265-1283 form a helical membrane-spanning segment; the sequence is PFEYMMFVLIMLNTLCLAM. The Extracellular portion of the chain corresponds to 1284–1298; sequence QHYEQSKMFNDAMDI. The chain crosses the membrane as a helical span at residues 1299–1318; that stretch reads LNMVFTGVFTVEMVLKVIAF. Residues 1319–1325 are Cytoplasmic-facing; that stretch reads KPKGYFS. The chain crosses the membrane as a helical span at residues 1326–1347; it reads DAWNTFDSLIVIGSIIDVALSE. Residues 1348-1357 are Extracellular-facing; it reads ADNSEESNRI. Residues 1358–1377 traverse the membrane as a helical segment; it reads SITFFRLFRVMRLVKLLSRG. Residues 1378–1396 lie on the Cytoplasmic side of the membrane; the sequence is EGIRTLLWTFIKSFQALPY. The helical transmembrane segment at 1397 to 1416 threads the bilayer; the sequence is VALLIAMLFFIYAVIGMQMF. The Extracellular segment spans residues 1417–1483; it reads GKVAMRDNNQ…GEEYTCGSNF (67 aa). The dihydropyridine binding stretch occupies residues 1464-1530; it reads LCDPDSDYNP…LGPHHLDEFK (67 aa). The tract at residues 1476–1519 is phenylalkylamine binding; sequence EYTCGSNFAIVYFISFYMLCAFLIINLFVAVIMDNFDYLTRDWS. Residues 1484-1508 traverse the membrane as a helical segment; that stretch reads AIVYFISFYMLCAFLIINLFVAVIM. At 1509-2203 the chain is on the cytoplasmic side; sequence DNFDYLTRDW…ADEMICITTL (695 aa). 4 disordered regions span residues 1734-1766, 1795-1816, 1920-1963, and 2176-2195; these read NHVNSDRRESLQQTNTTHRPLHVQRPSIPPASD, TSTNANLNNANMSKAAHGKRPS, FERP…HRRS, and GPGYSDEEPDPGREEEDLAD. A compositionally biased stretch (polar residues) spans 1795-1806; sequence TSTNANLNNANM. The span at 2180–2195 shows a compositional bias: acidic residues; it reads SDEEPDPGREEEDLAD.

The protein belongs to the calcium channel alpha-1 subunit (TC 1.A.1.11) family. CACNA1D subfamily. As to quaternary structure, voltage-dependent calcium channels are multisubunit complexes, consisting of alpha-1, alpha-2, beta and delta subunits in a 1:1:1:1 ratio. The channel activity is directed by the pore-forming and voltage-sensitive alpha-1 subunit. In many cases, this subunit is sufficient to generate voltage-sensitive calcium channel activity. The auxiliary subunits beta and alpha-2/delta linked by a disulfide bridge regulate the channel activity. Interacts with CABP1 and CABP4, resulting in a near elimination of calcium-dependent inactivation of the channel. Interacts with RIMBP2. As to expression, expressed in brain, pancreatic islets and B-lymphocytes.

The protein localises to the membrane. The catalysed reaction is Ca(2+)(in) = Ca(2+)(out). Its function is as follows. Voltage-sensitive calcium channels (VSCC) mediate the entry of calcium ions into excitable cells and are also involved in a variety of calcium-dependent processes, including muscle contraction, hormone or neurotransmitter release, gene expression, cell motility, cell division and cell death. The isoform alpha-1D gives rise to L-type calcium currents. Long-lasting (L-type) calcium channels belong to the 'high-voltage activated' (HVA) group. They are blocked by dihydropyridines (DHP), phenylalkylamines, and by benzothiazepines. In terms of biological role, voltage-sensitive calcium channels (VSCC) mediate the entry of calcium ions into excitable cells and are also involved in a variety of calcium-dependent processes, including muscle contraction, hormone or neurotransmitter release, gene expression, cell motility, cell division and cell death. The isoform alpha-1D gives rise to L-type calcium currents. This is Voltage-dependent L-type calcium channel subunit alpha-1D (Cacna1d) from Rattus norvegicus (Rat).